Reading from the N-terminus, the 577-residue chain is MADVAGPSRPSAAAFWSRDFSDEEQSVVYVPGISAEGNVRSRHKLMSPKADVKLKTSRVTDASISMESLKGTGDSVDEQNSCRGEIKSASLKDLCLEDKRRIANLIKELARVSEEKEVTEERLKAEQESFEKKIRQLEEQNELIIKEREALQLQYRECQELLSLYQKYLSEQQEKLTMSLSELGAARMQEQQVSSRKSTLQCSSVELDGSYLSIARPQTYYQTKQRPKSAVQDSASESLIAFRNNSLKPVTLHHPKDDLDKIPSETTTCNCESPGRKPAVPTEKMPQEELHMKECPHLKPTPSQCCGHRLAADRVHDSHPTNMTPQHPKTHPESCSYCRLSWASLVHGGGALQPIETLKKQISEDRKQQLMLQKMELEIEKERLQHLLAQQETKLLLKQQQLHQSRLDYNCLLKSNCDGWLLGTSSSIKKHQDPPNSGENRKERKTVGFHSHMKDDAQWSCQKKDTCRPQRGTVTGVRKDASTSPMPTGSLKDFVTTASPSLQHTTSRYETSLLDLVQSLSPNSAPKPQRYPSREAGAWNHGTFRLSPLKSTRKKMGMHRTPEELEENQILEDIFFI.

Serine 21 is modified (phosphoserine). A coiled-coil region spans residues 91–167 (LKDLCLEDKR…CQELLSLYQK (77 aa)). Serine 179 is modified (phosphoserine). Residues 251–282 (TLHHPKDDLDKIPSETTTCNCESPGRKPAVPT) are disordered. Residues 254–263 (HPKDDLDKIP) are compositionally biased toward basic and acidic residues. Positions 358 to 402 (LKKQISEDRKQQLMLQKMELEIEKERLQHLLAQQETKLLLKQQQL) form a coiled coil. Disordered regions lie at residues 425–444 (SSSIKKHQDPPNSGENRKER), 449–492 (FHSH…GSLK), and 520–540 (LSPNSAPKPQRYPSREAGAWN). Basic and acidic residues predominate over residues 449–468 (FHSHMKDDAQWSCQKKDTCR). Residues serine 490 and serine 521 each carry the phosphoserine modification.

As to quaternary structure, interacts (via N- and C-terminal domains) with SMC3 (via central hinge region). In terms of tissue distribution, widely expressed.

Its function is as follows. Competes with SMC1 for binding to SMC3. May affect the availability of SMC3 to engage in the formation of multimeric protein complexes. In Homo sapiens (Human), this protein is Protein hinderin (KIAA1328).